The sequence spans 110 residues: Transcription factor S (110 aa).

Zn(2+) is bound by residues Cys4, Cys7, Cys22, Cys25, Cys71, Cys74, Cys99, and Cys102. Residues 67–107 form a TFIIS-type zinc finger; that stretch reads TKVTCPKCGNDTAYWWEMQTRAGDEPSTIFYKCTKCGYTWR.

Belongs to the archaeal rpoM/eukaryotic RPA12/RPB9/RPC11 RNA polymerase family.

It localises to the chromosome. Its function is as follows. Involved in transcriptional proofreading and fidelity. Induces RNA cleavage activity in RNA polymerase (RNAP). Stimulates transcription elongation by RNAP on both naked DNA and histone-bound DNA (chromatin), facilitating transcription through the histone barrier. Stimulation depends on transcript cleavage. In the presence of TFS, the cleavage activity of RNAP truncates RNA back to position +15 in a stepwise manner by releasing mainly dinucleotides from the 3'-end of the nascent RNA. The truncated RNAs are able to continue elongation. Misincorporation of nucleotides during elongation of transcription leads to arrested elongation complexes which are rescued by TFS-promoted removal of a dinucleotide from the 3'-end. TFS is able to induce a cleavage resynthesis cycle in stalled elongation complexes (resulting from the next missing nucleotide or a reduced incorporation rate of a wrong nucleotide) preventing misincorporation and enabling proofreading in a post-incorporation manner. Pausing of elongation complexes is the main determinant of TFS-induced RNA cleavage. This is Transcription factor S from Thermococcus kodakarensis (strain ATCC BAA-918 / JCM 12380 / KOD1) (Pyrococcus kodakaraensis (strain KOD1)).